Reading from the N-terminus, the 887-residue chain is Bifunctional uridylyltransferase/uridylyl-removing enzyme (887 aa).

The tract at residues 1–337 (MINTSPLLNY…RLPNYERKIE (337 aa)) is uridylyltransferase. Positions 339 to 699 (VNDHFKIVDN…AHRKAAQDAV (361 aa)) are uridylyl-removing. Residues 457 to 579 (VDAHTLLLLR…LGDMEHLDYL (123 aa)) form the HD domain. ACT domains are found at residues 700–782 (QIFI…LMQR) and 809–887 (MVEI…ICQH).

Belongs to the GlnD family. The cofactor is Mg(2+).

It carries out the reaction [protein-PII]-L-tyrosine + UTP = [protein-PII]-uridylyl-L-tyrosine + diphosphate. It catalyses the reaction [protein-PII]-uridylyl-L-tyrosine + H2O = [protein-PII]-L-tyrosine + UMP + H(+). Its activity is regulated as follows. Uridylyltransferase (UTase) activity is inhibited by glutamine, while glutamine activates uridylyl-removing (UR) activity. In terms of biological role, modifies, by uridylylation and deuridylylation, the PII regulatory proteins (GlnB and homologs), in response to the nitrogen status of the cell that GlnD senses through the glutamine level. Under low glutamine levels, catalyzes the conversion of the PII proteins and UTP to PII-UMP and PPi, while under higher glutamine levels, GlnD hydrolyzes PII-UMP to PII and UMP (deuridylylation). Thus, controls uridylylation state and activity of the PII proteins, and plays an important role in the regulation of nitrogen assimilation and metabolism. The sequence is that of Bifunctional uridylyltransferase/uridylyl-removing enzyme from Acinetobacter baumannii (strain ATCC 17978 / DSM 105126 / CIP 53.77 / LMG 1025 / NCDC KC755 / 5377).